The chain runs to 142 residues: Ctenidin-3 (142 aa).

An N-terminal signal peptide occupies residues 1–19 (MKHLIPLIVMASVVLAVYA). The residue at position 139 (Y139) is a Tyrosine amide.

As to expression, expressed in hemocytes (at protein level).

It is found in the secreted. Functionally, antimicrobial protein with bacteriostatic activity against the Gram-negative bacterium E.coli, and very weak activity against the Gram-positive bacterium S.aureus. Lacks activity against the yeast C.albicans. In Cupiennius salei (American wandering spider), this protein is Ctenidin-3.